The chain runs to 150 residues: MQVILLDKVANLGSLGDQVNVKAGYARNFLVPQGKAVPATKKNVEFFEARRAELEAKLADVLAAAEARAAKIKELGSVTIASKAGDEGKLFGSIGTRDIADAVTAAGVDIAKSEVRLPNGVLRTLGEHEVSFQVHSDVFAELNVVVVAEA.

It belongs to the bacterial ribosomal protein bL9 family.

Binds to the 23S rRNA. The protein is Large ribosomal subunit protein bL9 of Pectobacterium carotovorum subsp. carotovorum (strain PC1).